Consider the following 245-residue polypeptide: MIIPALDFIDGSVVRLHQGDYGRQRDYDGDALARLLEYQRQGAAQLHLVDLSGARDPARRQLPMLTRLLRALSVPVQVGGGVRSAEDVATLLDAGATRVVVGSTAVRQPQEVARWFTRFGADRLVLALDVRIAANGDKRVAVSGWQEDSGVTLEQTVAHFLPLGLRHVLCTDIACDGTLGGANVALYRQICPRYPQIEFQSSGGIGALQDITALRGSGVQGIIVGRALLEGKFSVKEAIACWQNA.

The active-site Proton acceptor is the Asp-7. Residue Asp-129 is the Proton donor of the active site.

This sequence belongs to the HisA/HisF family.

The protein resides in the cytoplasm. It catalyses the reaction 1-(5-phospho-beta-D-ribosyl)-5-[(5-phospho-beta-D-ribosylamino)methylideneamino]imidazole-4-carboxamide = 5-[(5-phospho-1-deoxy-D-ribulos-1-ylimino)methylamino]-1-(5-phospho-beta-D-ribosyl)imidazole-4-carboxamide. Its pathway is amino-acid biosynthesis; L-histidine biosynthesis; L-histidine from 5-phospho-alpha-D-ribose 1-diphosphate: step 4/9. This Edwardsiella ictaluri (strain 93-146) protein is 1-(5-phosphoribosyl)-5-[(5-phosphoribosylamino)methylideneamino] imidazole-4-carboxamide isomerase.